The primary structure comprises 136 residues: Protein NrdI (136 aa).

Belongs to the NrdI family.

In terms of biological role, probably involved in ribonucleotide reductase function. The chain is Protein NrdI from Enterobacter sp. (strain 638).